The sequence spans 341 residues: HTH-type transcriptional repressor PurR (341 aa).

In terms of domain architecture, HTH lacI-type spans 2-56 (ATIKDVAKRAGVSTTTVSHVINKTRFVAEETKAAVGAAIKELHYSPSAVARSLKV). Residues 4-23 (IKDVAKRAGVSTTTVSHVIN) constitute a DNA-binding region (H-T-H motif). Residues 48-56 (SAVARSLKV) mediate DNA binding. Hypoxanthine contacts are provided by Tyr-73, Arg-190, Thr-192, Phe-221, and Asp-275.

In terms of assembly, homodimer.

It participates in purine metabolism; purine nucleotide biosynthesis [regulation]. Functionally, is the main repressor of the genes involved in the de novo synthesis of purine nucleotides, regulating purB, purC, purEK, purF, purHD, purL, purMN and guaBA expression. PurR is allosterically activated to bind its cognate DNA by binding the purine corepressors, hypoxanthine or guanine, thereby effecting transcription repression. The sequence is that of HTH-type transcriptional repressor PurR from Serratia proteamaculans (strain 568).